The sequence spans 350 residues: Isopentenyl-diphosphate delta-isomerase (350 aa).

15–16 lines the substrate pocket; the sequence is RK. Residues Ser-73, 74 to 76, Ser-104, and Asn-132 contribute to the FMN site; that span reads SMT. Residue 104-106 participates in substrate binding; that stretch reads SQR. Gln-167 provides a ligand contact to substrate. Residue Glu-168 participates in Mg(2+) binding. Residues Lys-199, Thr-229, 279–281, and 300–301 contribute to the FMN site; these read GLR and AM.

Belongs to the IPP isomerase type 2 family. Homooctamer. Dimer of tetramers. FMN is required as a cofactor. NADPH serves as cofactor. Requires Mg(2+) as cofactor.

The protein localises to the cytoplasm. It carries out the reaction isopentenyl diphosphate = dimethylallyl diphosphate. Functionally, involved in the biosynthesis of isoprenoids. Catalyzes the 1,3-allylic rearrangement of the homoallylic substrate isopentenyl (IPP) to its allylic isomer, dimethylallyl diphosphate (DMAPP). The chain is Isopentenyl-diphosphate delta-isomerase from Nostoc sp. (strain PCC 7120 / SAG 25.82 / UTEX 2576).